The primary structure comprises 244 residues: Ureidoacrylate amidohydrolase RutB (244 aa).

Asp-38 serves as the catalytic Proton acceptor. Lys-147 is an active-site residue. The Nucleophile role is filled by Cys-180.

This sequence belongs to the isochorismatase family. RutB subfamily.

The enzyme catalyses (Z)-3-ureidoacrylate + H2O + H(+) = (Z)-3-aminoacrylate + NH4(+) + CO2. It catalyses the reaction (Z)-3-ureidoacrylate + H2O = (Z)-3-aminoacrylate + carbamate + H(+). The catalysed reaction is (Z)-2-methylureidoacrylate + H2O + H(+) = (Z)-2-methylaminoacrylate + NH4(+) + CO2. Hydrolyzes ureidoacrylate to form aminoacrylate and carbamate. The carbamate hydrolyzes spontaneously, thereby releasing one of the nitrogen atoms of the pyrimidine ring as ammonia and one of its carbon atoms as CO2. This is Ureidoacrylate amidohydrolase RutB from Shigella sonnei (strain Ss046).